The following is a 263-amino-acid chain: MILDMFRLDDKVAVITGGGRGLGAAIALAFAQAGADVLIASRTSSELDAVAEQIRAAGRRAHTVAADLAHPEVTAQLAGQAVGAFGKLDIVVNNVGGTMPNTLLSTSTKDLADAFAFNVGTAHALTVAAVPLMLEHSGGGSVINISSTMGRLAARGFAAYGTAKAALAHYTRLAALDLCPRVRVNAIAPGSILTSALEVVAANDELRAPMEQATPLRRLGDPVDIAAAAVYLASPAGSFLTGKTLEVDGGLTFPNLDLPIPDL.

NAD(+) is bound at residue 17–41 (GGGRGLGAAIALAFAQAGADVLIAS). Position 147 (Ser-147) interacts with substrate. Catalysis depends on Tyr-160, which acts as the Proton acceptor. Residue Lys-164 coordinates NAD(+).

It belongs to the short-chain dehydrogenases/reductases (SDR) family.

This is an uncharacterized protein from Mycobacterium tuberculosis (strain CDC 1551 / Oshkosh).